Consider the following 281-residue polypeptide: Protein NipSnap homolog 2 (281 aa).

Residues 1–27 (MAARVLLARGGLLRPAAQSAFLPGLRT) constitute a mitochondrion transit peptide.

Belongs to the NipSnap family. In terms of assembly, interacts with CALCOCO2/NDP52, NBR1, SQSTM1/p62, TAX1BP1 and WDFY3/ALFY. Interacts with ATG8 family proteins (MAP1LC3A, MAP1LC3B, MAP1LC3C, GABARAP, GABARAPL1 and GABARAPL2). Interacts with VDAC1.

Its subcellular location is the mitochondrion matrix. The protein localises to the cytoplasm. Its function is as follows. Protein involved in mitophagy by facilitating recruitment of the autophagy machinery required for clearance of damaged mitochondria. Accumulates on the mitochondria surface in response to mitochondrial depolarization and acts as a 'eat me' signal by recruiting proteins involved in selective autophagy, such as autophagy receptors (CALCOCO2/NDP52, NBR1, SQSTM1/p62, TAX1BP1 and WDFY3/ALFY) and ATG8 family proteins (MAP1LC3A, MAP1LC3B, MAP1LC3C, GABARAP, GABARAPL1 and GABARAPL2). May act as a positive regulator of L-type calcium channels. In Mus musculus (Mouse), this protein is Protein NipSnap homolog 2.